A 499-amino-acid chain; its full sequence is Maturase K (499 aa).

It belongs to the intron maturase 2 family. MatK subfamily.

The protein localises to the plastid. It localises to the chloroplast. Usually encoded in the trnK tRNA gene intron. Probably assists in splicing its own and other chloroplast group II introns. The chain is Maturase K from Ceratozamia mexicana (Mexican horncone).